A 143-amino-acid chain; its full sequence is Class I hydrophobin 20 (143 aa).

The N-terminal stretch at 1 to 22 is a signal peptide; sequence MLSHPMKLLFFVFALSALLAAA. 4 disulfides stabilise this stretch: C54–C123, C62–C117, C63–C102, and C124–C137.

It belongs to the fungal hydrophobin family. As to quaternary structure, self-assembles to form functional amyloid fibrils called rodlets. Self-assembly into fibrillar rodlets occurs spontaneously at hydrophobic:hydrophilic interfaces and the rodlets further associate laterally to form amphipathic monolayers.

It localises to the secreted. Its subcellular location is the cell wall. Aerial growth, conidiation, and dispersal of filamentous fungi in the environment rely upon a capability of their secreting small amphipathic proteins called hydrophobins (HPBs) with low sequence identity. Class I can self-assemble into an outermost layer of rodlet bundles on aerial cell surfaces, conferring cellular hydrophobicity that supports fungal growth, development and dispersal; whereas Class II form highly ordered films at water-air interfaces through intermolecular interactions but contribute nothing to the rodlet structure. Hydph20 is a class I hydrophobin involved in mycelial growth. The polypeptide is Class I hydrophobin 20 (Pleurotus ostreatus (strain PC15) (Oyster mushroom)).